The primary structure comprises 88 residues: Small ribosomal subunit protein bS20 (88 aa).

Residues methionine 1–serine 27 are disordered.

Belongs to the bacterial ribosomal protein bS20 family.

Functionally, binds directly to 16S ribosomal RNA. This chain is Small ribosomal subunit protein bS20, found in Streptomyces griseus subsp. griseus (strain JCM 4626 / CBS 651.72 / NBRC 13350 / KCC S-0626 / ISP 5235).